The chain runs to 164 residues: Ribosome maturation factor RimM (164 aa).

Positions 93–164 (DSEYYVANLN…FVVIVPPEFI (72 aa)) constitute a PRC barrel domain.

This sequence belongs to the RimM family. As to quaternary structure, binds ribosomal protein uS19.

The protein resides in the cytoplasm. In terms of biological role, an accessory protein needed during the final step in the assembly of 30S ribosomal subunit, possibly for assembly of the head region. Essential for efficient processing of 16S rRNA. May be needed both before and after RbfA during the maturation of 16S rRNA. It has affinity for free ribosomal 30S subunits but not for 70S ribosomes. The chain is Ribosome maturation factor RimM from Orientia tsutsugamushi (strain Boryong) (Rickettsia tsutsugamushi).